The following is a 366-amino-acid chain: Probable protein arginine N-methyltransferase 1.2 (366 aa).

The region spanning 45 to 347 (ADYYFDSYSH…NPRDVDIKLS (303 aa)) is the SAM-dependent MTase PRMT-type domain. Residues glutamate 157 and glutamate 166 contribute to the active site.

The protein belongs to the class I-like SAM-binding methyltransferase superfamily. Protein arginine N-methyltransferase family. As to quaternary structure, interacts with FIB2 and PRMT11.

The protein localises to the nucleus. It is found in the cytoplasm. Its function is as follows. Methylates (mono and asymmetric dimethylation) the guanidino nitrogens of arginyl residues present in a glycine and arginine-rich domain. Type I arginine methyltransferase active on both histones and non-histone proteins. Mediates the methylation of MED36A. The chain is Probable protein arginine N-methyltransferase 1.2 (PRMT12) from Arabidopsis thaliana (Mouse-ear cress).